A 578-amino-acid chain; its full sequence is Dystrotelin (578 aa).

Residues 223–279 form a ZZ-type zinc finger; sequence THPARCTLCRTFPITGLRYRCLKCLNFDICQMCFLSGLHSKSHQKSHPVIEHCIQMS. Zn(2+)-binding residues include cysteine 228, cysteine 231, cysteine 243, cysteine 246, cysteine 252, cysteine 255, histidine 265, and histidine 269. Residues 322–351 adopt a coiled-coil conformation; it reads HHAQARLLKKQLNQYKDKLQAIYTSQEERI. Positions 382–475 are disordered; that stretch reads RLQPPGPSSS…QSQTQKMPQK (94 aa). Composition is skewed to basic and acidic residues over residues 399–410 and 431–451; these read KVDHSSTEKVPK and PKLDEVDRSHRSHTNAEHALR. The span at 455 to 472 shows a compositional bias: polar residues; it reads SPETTLHSTRAQSQTQKM. Positions 503 to 537 form a coiled coil; sequence ALAAVEKKEAGNIKERKDELEEEELQELLSKLMDA.

Its subcellular location is the cell membrane. The polypeptide is Dystrotelin (DYTN) (Homo sapiens (Human)).